Reading from the N-terminus, the 366-residue chain is tRNA 2-selenouridine synthase (366 aa).

A Rhodanese domain is found at 12–135; it reads FLNDVPMMDA…MRTFLLDTLH (124 aa). The active-site S-selanylcysteine intermediate is the C95.

This sequence belongs to the SelU family. In terms of assembly, monomer.

The enzyme catalyses 5-methylaminomethyl-2-thiouridine(34) in tRNA + selenophosphate + (2E)-geranyl diphosphate + H2O + H(+) = 5-methylaminomethyl-2-selenouridine(34) in tRNA + (2E)-thiogeraniol + phosphate + diphosphate. The catalysed reaction is 5-methylaminomethyl-2-thiouridine(34) in tRNA + (2E)-geranyl diphosphate = 5-methylaminomethyl-S-(2E)-geranyl-thiouridine(34) in tRNA + diphosphate. It catalyses the reaction 5-methylaminomethyl-S-(2E)-geranyl-thiouridine(34) in tRNA + selenophosphate + H(+) = 5-methylaminomethyl-2-(Se-phospho)selenouridine(34) in tRNA + (2E)-thiogeraniol. It carries out the reaction 5-methylaminomethyl-2-(Se-phospho)selenouridine(34) in tRNA + H2O = 5-methylaminomethyl-2-selenouridine(34) in tRNA + phosphate. In terms of biological role, involved in the post-transcriptional modification of the uridine at the wobble position (U34) of tRNA(Lys), tRNA(Glu) and tRNA(Gln). Catalyzes the conversion of 2-thiouridine (S2U-RNA) to 2-selenouridine (Se2U-RNA). Acts in a two-step process involving geranylation of 2-thiouridine (S2U) to S-geranyl-2-thiouridine (geS2U) and subsequent selenation of the latter derivative to 2-selenouridine (Se2U) in the tRNA chain. This Pseudomonas syringae pv. tomato (strain ATCC BAA-871 / DC3000) protein is tRNA 2-selenouridine synthase.